We begin with the raw amino-acid sequence, 274 residues long: 2,3,4,5-tetrahydropyridine-2,6-dicarboxylate N-succinyltransferase (274 aa).

It belongs to the transferase hexapeptide repeat family.

It localises to the cytoplasm. It carries out the reaction (S)-2,3,4,5-tetrahydrodipicolinate + succinyl-CoA + H2O = (S)-2-succinylamino-6-oxoheptanedioate + CoA. The protein operates within amino-acid biosynthesis; L-lysine biosynthesis via DAP pathway; LL-2,6-diaminopimelate from (S)-tetrahydrodipicolinate (succinylase route): step 1/3. The polypeptide is 2,3,4,5-tetrahydropyridine-2,6-dicarboxylate N-succinyltransferase (Salmonella agona (strain SL483)).